Here is a 295-residue protein sequence, read N- to C-terminus: Methionine aminopeptidase (295 aa).

H63 is a binding site for substrate. A divalent metal cation contacts are provided by D83, D94, and H154. A substrate-binding site is contributed by H162. A divalent metal cation contacts are provided by E188 and E281.

This sequence belongs to the peptidase M24A family. Methionine aminopeptidase archaeal type 2 subfamily. Monomer. The cofactor is Co(2+). Zn(2+) is required as a cofactor. Requires Mn(2+) as cofactor. It depends on Fe(2+) as a cofactor.

It carries out the reaction Release of N-terminal amino acids, preferentially methionine, from peptides and arylamides.. Removes the N-terminal methionine from nascent proteins. The N-terminal methionine is often cleaved when the second residue in the primary sequence is small and uncharged (Met-Ala-, Cys, Gly, Pro, Ser, Thr, or Val). This chain is Methionine aminopeptidase, found in Thermococcus kodakarensis (strain ATCC BAA-918 / JCM 12380 / KOD1) (Pyrococcus kodakaraensis (strain KOD1)).